Reading from the N-terminus, the 225-residue chain is uncharacterized protein (225 aa).

Positions 1–48 (MTQLVTRARSARGSTLGEQPRQDQLDFADHTGTAGDGNDGAAAASGPV) are disordered. A compositionally biased stretch (basic and acidic residues) spans 20–29 (PRQDQLDFAD). The HTH merR-type domain occupies 64–136 (GYRGPSACQI…LHNIRVAVDH (73 aa)). The segment at 201-225 (DGGESIAAPEDELASRRKHRDRKIG) is disordered. Positions 216 to 225 (RRKHRDRKIG) are enriched in basic residues.

This is an uncharacterized protein from Mycobacterium tuberculosis (strain CDC 1551 / Oshkosh).